A 140-amino-acid polypeptide reads, in one-letter code: Large ribosomal subunit protein uL22 (140 aa).

This sequence belongs to the universal ribosomal protein uL22 family. In terms of assembly, part of the 50S ribosomal subunit.

In terms of biological role, this protein binds specifically to 23S rRNA; its binding is stimulated by other ribosomal proteins, e.g. L4, L17, and L20. It is important during the early stages of 50S assembly. It makes multiple contacts with different domains of the 23S rRNA in the assembled 50S subunit and ribosome. Its function is as follows. The globular domain of the protein is located near the polypeptide exit tunnel on the outside of the subunit, while an extended beta-hairpin is found that lines the wall of the exit tunnel in the center of the 70S ribosome. In Parafrankia sp. (strain EAN1pec), this protein is Large ribosomal subunit protein uL22.